Consider the following 728-residue polypeptide: Golgin subfamily A member 5 (728 aa).

N-acetylserine is present on Ser-2. Topologically, residues 2-695 (SWFADLAGRA…IFLRRYPIAR (694 aa)) are cytoplasmic. Dimethylated arginine occurs at positions 27 and 89. Residues 88–202 (SRTGGDASHP…KKSTEESTVS (115 aa)) are disordered. Position 116 is a phosphoserine (Ser-116). Residues 134 to 146 (PTGRVEIKKEKGK) are compositionally biased toward basic and acidic residues. Residues 152-167 (SSQSSAVSSVTTSVTT) are compositionally biased toward low complexity. A compositionally biased stretch (polar residues) spans 173–187 (ENSGSQSPEVSSSDS). A coiled-coil region spans residues 216–628 (GSMSHELSNL…LEQQLHSAAT (413 aa)). The chain crosses the membrane as a helical; Anchor for type IV membrane protein span at residues 696 to 716 (VFVIIYMALLHLWVMIVLLTY). At 717-728 (SPEMHHDQPYGK) the chain is on the lumenal side.

Homodimer. Interacts with RAB1A that has been activated by GTP-binding. Interacts with isoform CASP of CUX1. Post-translationally, highly phosphorylated during mitosis. Phosphorylation is barely detectable during interphase.

The protein localises to the golgi apparatus membrane. Its function is as follows. Involved in maintaining Golgi structure. Stimulates the formation of Golgi stacks and ribbons. Involved in intra-Golgi retrograde transport. The polypeptide is Golgin subfamily A member 5 (Golga5) (Rattus norvegicus (Rat)).